An 860-amino-acid chain; its full sequence is Protein argonaute-3 (860 aa).

The PAZ domain maps to 230 to 349 (PVIQFMCEVL…LPLEVCNIVA (120 aa)). Residues 518 to 819 (LIIVILPGKT…VAFRARYHLV (302 aa)) enclose the Piwi domain. An interaction with guide RNA region spans residues 530–567 (YAEVKRVGDTLLGMATQCVQVKNVVKTSPQTLSNLCLK). D598, E638, and D670 together coordinate a divalent metal cation. The interaction with guide RNA stretch occupies residues 758-805 (QGTSRPSHYYVLWDDNCFTADEFQLLTYQLCHTYVRCTRSVSIPAPAY). H808 contributes to the a divalent metal cation binding site.

It belongs to the argonaute family. Ago subfamily.

The protein resides in the cytoplasm. Its subcellular location is the P-body. The catalysed reaction is Endonucleolytic cleavage to 5'-phosphomonoester.. Its function is as follows. Required for RNA-mediated gene silencing (RNAi). Binds to short RNAs such as microRNAs (miRNAs) and represses the translation of mRNAs which are complementary to them. Possesses RNA slicer activity but only on select RNAs bearing 5'- and 3'-flanking sequences to the region of guide-target complementarity. In Danio rerio (Zebrafish), this protein is Protein argonaute-3 (ago3).